Consider the following 426-residue polypeptide: Putative zinc protease AlbF (426 aa).

Residue His-66 participates in Zn(2+) binding. Glu-69 serves as the catalytic Proton acceptor. Zn(2+)-binding residues include His-70 and Glu-142.

It belongs to the peptidase M16 family. Zn(2+) is required as a cofactor.

In terms of biological role, required for production of the bacteriocin subtilosin. Could catalyze some step in the processing of presubtilosin. In Bacillus subtilis (strain 168), this protein is Putative zinc protease AlbF (albF).